The following is a 277-amino-acid chain: Probable endonuclease 4 (277 aa).

The Zn(2+) site is built by His-70, His-108, Glu-145, Asp-178, His-181, His-212, Asp-225, His-227, and Glu-257.

The protein belongs to the AP endonuclease 2 family. Requires Zn(2+) as cofactor.

The catalysed reaction is Endonucleolytic cleavage to 5'-phosphooligonucleotide end-products.. Its function is as follows. Endonuclease IV plays a role in DNA repair. It cleaves phosphodiester bonds at apurinic or apyrimidinic (AP) sites, generating a 3'-hydroxyl group and a 5'-terminal sugar phosphate. This chain is Probable endonuclease 4, found in Mycoplasmopsis pulmonis (strain UAB CTIP) (Mycoplasma pulmonis).